Consider the following 210-residue polypeptide: tRNA (guanine-N(7)-)-methyltransferase (210 aa).

Residues Glu36, Glu61, Asp90, and Asp112 each contribute to the S-adenosyl-L-methionine site. Asp112 is a catalytic residue. Residues Lys116, Asp148, and 188-191 (TEYE) contribute to the substrate site.

Belongs to the class I-like SAM-binding methyltransferase superfamily. TrmB family.

It catalyses the reaction guanosine(46) in tRNA + S-adenosyl-L-methionine = N(7)-methylguanosine(46) in tRNA + S-adenosyl-L-homocysteine. It participates in tRNA modification; N(7)-methylguanine-tRNA biosynthesis. In terms of biological role, catalyzes the formation of N(7)-methylguanine at position 46 (m7G46) in tRNA. This is tRNA (guanine-N(7)-)-methyltransferase from Mycoplasma pneumoniae (strain ATCC 29342 / M129 / Subtype 1) (Mycoplasmoides pneumoniae).